The sequence spans 316 residues: ATP synthase gamma chain (316 aa).

Belongs to the ATPase gamma chain family. In terms of assembly, F-type ATPases have 2 components, CF(1) - the catalytic core - and CF(0) - the membrane proton channel. CF(1) has five subunits: alpha(3), beta(3), gamma(1), delta(1), epsilon(1). CF(0) has three main subunits: a, b and c.

The protein localises to the cellular thylakoid membrane. Functionally, produces ATP from ADP in the presence of a proton gradient across the membrane. The gamma chain is believed to be important in regulating ATPase activity and the flow of protons through the CF(0) complex. In Prochlorococcus marinus (strain MIT 9303), this protein is ATP synthase gamma chain.